The primary structure comprises 156 residues: Small ribosomal subunit protein uS7 (156 aa).

Belongs to the universal ribosomal protein uS7 family. As to quaternary structure, part of the 30S ribosomal subunit. Contacts proteins S9 and S11.

Its function is as follows. One of the primary rRNA binding proteins, it binds directly to 16S rRNA where it nucleates assembly of the head domain of the 30S subunit. Is located at the subunit interface close to the decoding center, probably blocks exit of the E-site tRNA. In Bacillus licheniformis (strain ATCC 14580 / DSM 13 / JCM 2505 / CCUG 7422 / NBRC 12200 / NCIMB 9375 / NCTC 10341 / NRRL NRS-1264 / Gibson 46), this protein is Small ribosomal subunit protein uS7.